Consider the following 102-residue polypeptide: MDIDIIEEDENPMLHRTDVRFEVVHDEATPSRLSVRDSLAATLNKDAEEVVIHKLDTKFGMRKTVGYAKVYDNPEYARDVEQDHMLERNKIVADGEEEAEEA.

This sequence belongs to the eukaryotic ribosomal protein eS24 family.

This is Small ribosomal subunit protein eS24 (rps24e) from Haloarcula marismortui (strain ATCC 43049 / DSM 3752 / JCM 8966 / VKM B-1809) (Halobacterium marismortui).